The following is a 54-amino-acid chain: MASKKGNRIVIKLKSTESGHTYTTEKNRRNDPNRLELRKYDPIVRRHVLYRETK.

The protein belongs to the bacterial ribosomal protein bL33 family.

The protein is Large ribosomal subunit protein bL33 of Chloroflexus aggregans (strain MD-66 / DSM 9485).